The sequence spans 270 residues: Methylthioribulose-1-phosphate dehydratase (270 aa).

Cys122 contacts substrate. Residues His140 and His142 each coordinate Zn(2+). Catalysis depends on Glu165, which acts as the Proton donor/acceptor. Residue His230 coordinates Zn(2+).

It belongs to the aldolase class II family. MtnB subfamily. Requires Zn(2+) as cofactor.

It is found in the cytoplasm. It catalyses the reaction 5-(methylsulfanyl)-D-ribulose 1-phosphate = 5-methylsulfanyl-2,3-dioxopentyl phosphate + H2O. The protein operates within amino-acid biosynthesis; L-methionine biosynthesis via salvage pathway; L-methionine from S-methyl-5-thio-alpha-D-ribose 1-phosphate: step 2/6. In terms of biological role, catalyzes the dehydration of methylthioribulose-1-phosphate (MTRu-1-P) into 2,3-diketo-5-methylthiopentyl-1-phosphate (DK-MTP-1-P). In Candida albicans (strain WO-1) (Yeast), this protein is Methylthioribulose-1-phosphate dehydratase.